The sequence spans 469 residues: Trehalose-6-phosphate synthase (469 aa).

Residue Arg10 coordinates D-glucose 6-phosphate. Position 22–23 (Gly22–Gly23) interacts with UDP-alpha-D-glucose. D-glucose 6-phosphate-binding residues include Tyr77 and Asp131. Positions 262 and 267 each coordinate UDP-alpha-D-glucose. D-glucose 6-phosphate is bound at residue Arg300. Leu365–Glu369 contacts UDP-alpha-D-glucose.

This sequence belongs to the glycosyltransferase 20 family. In terms of assembly, homotetramer.

The catalysed reaction is D-glucose 6-phosphate + UDP-alpha-D-glucose = alpha,alpha-trehalose 6-phosphate + UDP + H(+). It participates in glycan biosynthesis; trehalose biosynthesis. Its function is as follows. Probably involved in the osmoprotection via the biosynthesis of trehalose. Catalyzes the transfer of glucose from UDP-alpha-D-glucose (UDP-Glc) to D-glucose 6-phosphate (Glc-6-P) to form trehalose-6-phosphate. Acts with retention of the anomeric configuration of the UDP-sugar donor. This is Trehalose-6-phosphate synthase from Sodalis glossinidius (strain morsitans).